A 263-amino-acid polypeptide reads, in one-letter code: Troponin T, slow skeletal muscle (263 aa).

A compositionally biased stretch (acidic residues) spans 1–38 (MSDAEEQEYEEEQPEEEEAAEEEEEAPEEPEPAAEPEE). Disordered regions lie at residues 1–64 (MSDA…RVDF) and 109–154 (AERA…KKKV). S2 bears the Phosphoserine; by CK2 mark. Over residues 44–56 (SRPVVPPLIPPKI) the composition is skewed to pro residues. Residues 109 to 150 (AERAEQQRFRTEKERERQAKLAEEKMRKEEEEAKKRAEDDAK) show a composition bias toward basic and acidic residues.

It belongs to the troponin T family. Interacts with TPM3. In terms of tissue distribution, expressed dominantly in slow muscles, like masseter, diaphragm, psoas major and spinnalis. Isoform 2 is also expressed in fast muscles.

Its function is as follows. Troponin T is the tropomyosin-binding subunit of troponin, the thin filament regulatory complex which confers calcium-sensitivity to striated muscle actomyosin ATPase activity. The protein is Troponin T, slow skeletal muscle (TNNT1) of Bos taurus (Bovine).